We begin with the raw amino-acid sequence, 220 residues long: Miraculin (220 aa).

Residues 1-29 form the signal peptide; that stretch reads MKELTMLSLSFFFVSALLAAAANPLLSAA. Residue N71 is glycosylated (N-linked (GlcNAc...) asparagine). 3 disulfides stabilise this stretch: C76–C121, C177–C188, and C181–C184. The N-linked (GlcNAc...) asparagine glycan is linked to N215.

Belongs to the protease inhibitor I3 (leguminous Kunitz-type inhibitor) family. Homotetramer; dimer of homodimer. In terms of processing, glycosylated; contains as much as 13,9% of sugars (glucosamine, mannose, galactose, xylose, and fucose). As to expression, expressed in fruit pulp after pollination. Not expressed in seeds, stems or leaves.

In terms of biological role, miraculin has the property of modifying a sour taste into a sweet taste. This alteration of taste perception persists for many minutes. The chain is Miraculin from Synsepalum dulcificum (Miracle fruit).